Reading from the N-terminus, the 557-residue chain is Dihydroxy-acid dehydratase (557 aa).

A Mg(2+)-binding site is contributed by aspartate 78. Cysteine 119 serves as a coordination point for [2Fe-2S] cluster. The Mg(2+) site is built by aspartate 120 and lysine 121. An N6-carboxylysine modification is found at lysine 121. Residue cysteine 192 participates in [2Fe-2S] cluster binding. Glutamate 442 contributes to the Mg(2+) binding site. Serine 468 functions as the Proton acceptor in the catalytic mechanism.

Belongs to the IlvD/Edd family. Homodimer. The cofactor is [2Fe-2S] cluster. Mg(2+) serves as cofactor.

The catalysed reaction is (2R)-2,3-dihydroxy-3-methylbutanoate = 3-methyl-2-oxobutanoate + H2O. It catalyses the reaction (2R,3R)-2,3-dihydroxy-3-methylpentanoate = (S)-3-methyl-2-oxopentanoate + H2O. It participates in amino-acid biosynthesis; L-isoleucine biosynthesis; L-isoleucine from 2-oxobutanoate: step 3/4. It functions in the pathway amino-acid biosynthesis; L-valine biosynthesis; L-valine from pyruvate: step 3/4. Functionally, functions in the biosynthesis of branched-chain amino acids. Catalyzes the dehydration of (2R,3R)-2,3-dihydroxy-3-methylpentanoate (2,3-dihydroxy-3-methylvalerate) into 2-oxo-3-methylpentanoate (2-oxo-3-methylvalerate) and of (2R)-2,3-dihydroxy-3-methylbutanoate (2,3-dihydroxyisovalerate) into 2-oxo-3-methylbutanoate (2-oxoisovalerate), the penultimate precursor to L-isoleucine and L-valine, respectively. This is Dihydroxy-acid dehydratase from Bacillus cereus (strain Q1).